Reading from the N-terminus, the 230-residue chain is MSRLPSLSSLCLAIACSALLGGCVAAGDVRPFAELAPIVPVVAPVAQPTAGAIYAAGPSLNLYGDRRARDVGDLLTVNLVENTTASSTANTSISKADTVDMSTPTLLGVPLTVNGIDVLRNSTSGDRSFDGKGNTAQSNRMQGSVTVTVMQRLPNGNLVIQGQKNLRLTQGDELVQVQGIVRAADIAPDNSVPSSKVADARIAYGGRGAIAQSNAMGWLSRFFNSRLSPY.

An N-terminal signal peptide occupies residues 1–15; that stretch reads MSRLPSLSSLCLAIA. Cys16 carries N-palmitoyl cysteine lipidation. Cys16 is lipidated: S-diacylglycerol cysteine.

Belongs to the FlgH family. The basal body constitutes a major portion of the flagellar organelle and consists of four rings (L,P,S, and M) mounted on a central rod.

The protein resides in the cell outer membrane. The protein localises to the bacterial flagellum basal body. Its function is as follows. Assembles around the rod to form the L-ring and probably protects the motor/basal body from shearing forces during rotation. The polypeptide is Flagellar L-ring protein (Xanthomonas campestris pv. campestris (strain 8004)).